The chain runs to 116 residues: Movement protein TGB2 (116 aa).

At 1–11 (MPLTPPPNPQK) the chain is on the cytoplasmic side. A helical membrane pass occupies residues 12–32 (TYQIAILALGLVLLAFVLISD). Residues 33–77 (HSPKVGDHLHNLPFGGEYKDGTKSIKYFQRPNQHSLSKTLAKSHN) lie on the Lumenal side of the membrane. The helical transmembrane segment at 78–98 (TTIFLLILGLIVTLHGLHYFN) threads the bilayer. Over 99–116 (NNRRVSSSLHCVLCQNKH) the chain is Cytoplasmic.

The protein belongs to the Tymovirales TGBp2 protein family.

Its subcellular location is the host endoplasmic reticulum membrane. In terms of biological role, plays a role in viral cell-to-cell propagation, by facilitating genome transport to neighboring plant cells through plasmosdesmata,. In White clover mosaic virus (strain M) (WCMV), this protein is Movement protein TGB2.